The sequence spans 72 residues: MKLTSVVIVAVLFLAACQLTTSDGSRGTWKDRAVRSITKVSMLRWPCKVAGSPCGLVSECCGTCNVLRNRCV.

An N-terminal signal peptide occupies residues 1–22 (MKLTSVVIVAVLFLAACQLTTS). A propeptide spanning residues 23–46 (DGSRGTWKDRAVRSITKVSMLRWP) is cleaved from the precursor. 3 disulfides stabilise this stretch: C47-C61, C54-C64, and C60-C71.

It belongs to the conotoxin O1 superfamily. Expressed by the venom duct.

It localises to the secreted. The polypeptide is Conotoxin Lt6.3 (Conus litteratus (Lettered cone)).